The primary structure comprises 189 residues: Stathmin-4 (189 aa).

2 S-palmitoyl cysteine lipidation sites follow: Cys20 and Cys22. An SLD domain is found at 48–189; the sequence is SDMEVIELNK…NKELKEEASR (142 aa). The residue at position 90 (Ser90) is a Phosphoserine. A coiled-coil region spans residues 90-188; sequence SLEEIQKKLE…KNKELKEEAS (99 aa). A disordered region spans residues 168 to 189; that stretch reads QEKDKHAEEVRKNKELKEEASR.

The protein belongs to the stathmin family.

It localises to the golgi apparatus. Its subcellular location is the cell projection. The protein resides in the growth cone. It is found in the axon. Its function is as follows. Exhibits microtubule-destabilizing activity. In Homo sapiens (Human), this protein is Stathmin-4 (STMN4).